The sequence spans 101 residues: Small ribosomal subunit protein eS24 (101 aa).

This sequence belongs to the eukaryotic ribosomal protein eS24 family.

The sequence is that of Small ribosomal subunit protein eS24 from Methanosarcina mazei (strain ATCC BAA-159 / DSM 3647 / Goe1 / Go1 / JCM 11833 / OCM 88) (Methanosarcina frisia).